A 143-amino-acid polypeptide reads, in one-letter code: Transcription antitermination protein NusB (143 aa).

Belongs to the NusB family.

Involved in transcription antitermination. Required for transcription of ribosomal RNA (rRNA) genes. Binds specifically to the boxA antiterminator sequence of the ribosomal RNA (rrn) operons. The sequence is that of Transcription antitermination protein NusB from Mannheimia succiniciproducens (strain KCTC 0769BP / MBEL55E).